Reading from the N-terminus, the 1125-residue chain is MPRAPRCRAVRALLRASYRQVLPLAAFVRRLRPQGHRLVRRGDPAAFRALVAQCLVCVPWDAQPPPAAPSFRQVSCLKELVARVVQRLCERGARNVLAFGFTLLAGARGGPPVAFTTSVRSYLPNTVTDTLRGSGAWGLLLHRVGDDVLTHLLSRCALYLLVPPTCAYQVCGPPLYDLRAAAAAARRPTRQVGGTRAGFGLPRPASSNGGHGEAEGLLEARAQGARRRRSSARGRLPPAKRPRRGLEPGRDLEGQVARSPPRVVTPTRDAAEAKSRKGDVPGPCRLFPGGERGVGSASWRLSPSEGEPGAGACAETKRFLYCSGGGEQLRRSFLLCSLPPSLAGARTLVETIFLDSKPGPPGAPRRPRRLPARYWQMRPLFRKLLGNHARSPYGALLRAHCPLPASAPRAGPDHQKCPGVGGCPSERPAAAPEGEANSGRLVQLLRQHSSPWQVYGLLRACLRRLVPAGLWGSRHNERRFLRNVKKLLSLGKHGRLSQQELTWKMKVQDCAWLRASPGARCVPAAEHRQREAVLGRFLHWLMGAYVVELLRSFFYVTETTFQKNRLFFFRKRIWSQLQRLGVRQHLDRVRLRELSEAEVRQHQEARPALLTSRLRFVPKPGGLRPIVNVGCVEGAPAPPRDKKVQHLSSRVKTLFAVLNYERARRPGLLGASVLGMDDIHRAWRAFVLPLRARGPAPPLYFVKVDVVGAYDALPQDKLAEVIANVLQPQENTYCVRHCAMVRTARGRMRKSFKRHVSTFSDFQPYLRQLVEHLQAMGSLRDAVVIEQSCSLNEPGSSLFNLFLHLVRSHVIRIGGRSYIQCQGIPQGSILSTLLCSFCYGDMENKLFPGVQQDGVLLRLVDDFLLVTPHLTRARDFLRTLVRGVPEYGCQVNLRKTVVNFPVEPGALGGAAPLQLPAHCLFPWCGLLLDTRTLEVHGDHSSYARTSIRASLTFTQGFKPGRNMRRKLLAVLQLKCHGLFLDLQVNSLQTVFTNVYKIFLLQAYRFHACVLQLPFSQPVRSSPAFFLQVIADTASRGYALLKARNAGASLGARGAAGLFPSEAAQWLCLHAFLLKLARHRVTYSRLLGALRTARARLHRQLPGPTRAALEAAADPALTADFKTILD.

Residues 1 to 234 form an RNA-interacting domain 1 region; the sequence is MPRAPRCRAV…ARRRRSSARG (234 aa). Residues 58–199 are GQ motif; the sequence is VPWDAQPPPA…RQVGGTRAGF (142 aa). The tract at residues 137–141 is required for regulating specificity for telomeric DNA and for processivity for primer elongation; the sequence is WGLLL. Residues 186 to 308 form a disordered region; sequence RRPTRQVGGT…WRLSPSEGEP (123 aa). Basic residues predominate over residues 224 to 243; the sequence is GARRRRSSARGRLPPAKRPR. The Bipartite nuclear localization signal motif lies at 226–244; sequence RRRRSSARGRLPPAKRPRR. The residue at position 231 (Ser-231) is a Phosphoserine; by PKB/AKT1. The tract at residues 235–312 is linker; that stretch reads RLPPAKRPRR…PSEGEPGAGA (78 aa). Basic and acidic residues-rich tracts occupy residues 244–253 and 269–279; these read RGLEPGRDLE and DAAEAKSRKGD. Positions 290-531 are required for oligomerization; sequence GERGVGSASW…VPAAEHRQRE (242 aa). Residues 313 to 543 form an RNA-interacting domain 2 region; sequence CAETKRFLYC…LGRFLHWLMG (231 aa). Positions 316–321 match the TFLY; involved in RNA binding motif; that stretch reads TKRFLY. A QFP motif region spans residues 364 to 514; sequence PRRPRRLPAR…MKVQDCAWLR (151 aa). The tract at residues 385–405 is CP motif; the sequence is LGNHARSPYGALLRAHCPLPA. A Phosphoserine; by DYRK2 modification is found at Ser-450. Residues 598 to 928 form the Reverse transcriptase domain; sequence EVRQHQEARP…CLFPWCGLLL (331 aa). Residue Tyr-700 is modified to Phosphotyrosine; by SRC-type Tyr-kinases. Positions 705, 861, and 862 each coordinate Mg(2+). The tract at residues 907–921 is required for oligomerization; sequence LGGAAPLQLPAHCLF. The interval 923 to 927 is primer grip sequence; that stretch reads WCGLL. The tract at residues 929–1125 is CTE; it reads DTRTLEVHGD…LTADFKTILD (197 aa).

It belongs to the reverse transcriptase family. Telomerase subfamily. As to quaternary structure, catalytic component of the telomerase holoenzyme complex composed of one molecule of TERT, one molecule of WRAP53/TCAB1, two molecules of H/ACA ribonucleoprotein complex subunits DKC1, NOP10, NHP2 and GAR1, and a telomerase RNA template component (TERC). The telomerase holoenzyme complex is associated with TEP1, SMG6/EST1A and POT1. The molecular chaperone HSP90/P23 complex is required for correct assembly and stabilization of the active telomerase. Interacts directly with HSP90A and PTGES3. Interacts with HSPA1A; the interaction occurs in the absence of TERC and dissociates once the complex has formed. Interacts with RAN; the interaction promotes nuclear export of TERT. Interacts with XPO1. Interacts with PTPN11; the interaction retains TERT in the nucleus. Interacts with NCL (via RRM1 and C-terminal RRM4/Arg/Gly-rich domains); the interaction is important for nucleolar localization of TERT. Interacts with SMARCA4 (via the bromodomain); the interaction regulates Wnt-mediated signaling. Interacts with MCRS1 (isoform MCRS2); the interaction inhibits in vitro telomerase activity. Interacts with PIF1; the interaction has no effect on the elongation activity of TERT. Interacts with PML; the interaction recruits TERT to PML bodies and inhibits telomerase activity. Interacts with GNL3L. Interacts with isoform 1 and isoform 2 of NVL. Interacts with DHX36. Interacts with ATF7. Phosphorylation at Tyr-700 under oxidative stress leads to translocation of TERT to the cytoplasm and reduces its antiapoptotic activity. Dephosphorylated by SHP2/PTPN11 leading to nuclear retention. Phosphorylation at Ser-231 by the AKT pathway promotes nuclear location. Phosphorylation at the G2/M phase at Ser-450 by DYRK2 promotes ubiquitination by the EDVP complex and degradation. In terms of processing, ubiquitinated by the EDVP complex, a E3 ligase complex following phosphorylation at Ser-450 by DYRK2. Ubiquitinated leads to proteasomal degradation.

The protein resides in the nucleus. The protein localises to the nucleolus. It is found in the nucleoplasm. It localises to the chromosome. Its subcellular location is the telomere. The protein resides in the cytoplasm. The protein localises to the PML body. It catalyses the reaction DNA(n) + a 2'-deoxyribonucleoside 5'-triphosphate = DNA(n+1) + diphosphate. Telomerase is a ribonucleoprotein enzyme essential for the replication of chromosome termini in most eukaryotes. Active in progenitor and cancer cells. Inactive, or very low activity, in normal somatic cells. Catalytic component of the teleromerase holoenzyme complex whose main activity is the elongation of telomeres by acting as a reverse transcriptase that adds simple sequence repeats to chromosome ends by copying a template sequence within the RNA component of the enzyme. Catalyzes the RNA-dependent extension of 3'-chromosomal termini with the 6-nucleotide telomeric repeat unit, 5'-TTAGGG-3'. The catalytic cycle involves primer binding, primer extension and release of product once the template boundary has been reached or nascent product translocation followed by further extension. More active on substrates containing 2 or 3 telomeric repeats. Telomerase activity is regulated by a number of factors including telomerase complex-associated proteins, chaperones and polypeptide modifiers. Modulates Wnt signaling. Plays important roles in aging and antiapoptosis. The protein is Telomerase reverse transcriptase (TERT) of Bos taurus (Bovine).